We begin with the raw amino-acid sequence, 167 residues long: Ubiquitin-conjugating enzyme E2 14 (167 aa).

The residue at position 2 (alanine 2) is an N-acetylalanine. A UBC core domain is found at 5–165; sequence QASLLLQKQL…VSRCVRRSQE (161 aa). Cysteine 90 (glycyl thioester intermediate) is an active-site residue.

It belongs to the ubiquitin-conjugating enzyme family.

It catalyses the reaction S-ubiquitinyl-[E1 ubiquitin-activating enzyme]-L-cysteine + [E2 ubiquitin-conjugating enzyme]-L-cysteine = [E1 ubiquitin-activating enzyme]-L-cysteine + S-ubiquitinyl-[E2 ubiquitin-conjugating enzyme]-L-cysteine.. It participates in protein modification; protein ubiquitination. Accepts the ubiquitin from the E1 complex and catalyzes its covalent attachment to other proteins. Involved in the formation of multiubiquitin chains. Signal the protein for selective degradation. The sequence is that of Ubiquitin-conjugating enzyme E2 14 (UBC14) from Arabidopsis thaliana (Mouse-ear cress).